Reading from the N-terminus, the 308-residue chain is Oxygen-dependent coproporphyrinogen-III oxidase (308 aa).

S100 is a binding site for substrate. Positions 104 and 114 each coordinate a divalent metal cation. The active-site Proton donor is the H114. N116–R118 provides a ligand contact to substrate. H153 and H183 together coordinate a divalent metal cation. Positions Y248 to K283 are important for dimerization. Residue G266–R268 participates in substrate binding.

Belongs to the aerobic coproporphyrinogen-III oxidase family. In terms of assembly, homodimer. It depends on a divalent metal cation as a cofactor.

Its subcellular location is the cytoplasm. It catalyses the reaction coproporphyrinogen III + O2 + 2 H(+) = protoporphyrinogen IX + 2 CO2 + 2 H2O. Its pathway is porphyrin-containing compound metabolism; protoporphyrin-IX biosynthesis; protoporphyrinogen-IX from coproporphyrinogen-III (O2 route): step 1/1. Involved in the heme biosynthesis. Catalyzes the aerobic oxidative decarboxylation of propionate groups of rings A and B of coproporphyrinogen-III to yield the vinyl groups in protoporphyrinogen-IX. This is Oxygen-dependent coproporphyrinogen-III oxidase from Francisella tularensis subsp. holarctica (strain FTNF002-00 / FTA).